Here is a 282-residue protein sequence, read N- to C-terminus: MEPKVAELKQKIEDTLCPFGFEVYPFQVAWYNELLPPAFHLPLPGPTLAFLVLSTPAMFDRALKPFLQSCHLRMLTDPVDQCVAYHLGRVRESLPELQIEIIADYEVHPNRRPKILAQTAAHVAGAAYYYQRQDVEADPWGNQRISGVCIHPRFGGWFAIRGVVLLPGIEVPDLPPRKPHDCVPTRADRIALLEGFNFHWRDWTYRDAVTPQERYSEEQKAYFSTPPAQRLALLGLAQPSEKPSSPSPDLPFTTPAPKKPGNPSRARSWLSPRVSPPASPGP.

Residues Asp-104, 115-118 (ILAQ), 129-131 (YYQ), Cys-149, and Ile-160 contribute to the substrate site. Positions 234–282 (LGLAQPSEKPSSPSPDLPFTTPAPKKPGNPSRARSWLSPRVSPPASPGP) are disordered. 4 positions are modified to phosphoserine: Ser-245, Ser-247, Ser-275, and Ser-279.

Belongs to the MMACHC family. As to quaternary structure, monomer in the absence of bound substrate. Homodimer; dimerization is triggered by binding to FMN or adenosylcobalamin. Interacts with LMBRD1 and ABCD4; the interaction ensures the transport of cobalamin from the lysosome to the cytoplasm. Forms a multiprotein complex with MMADHC, MTR and MTRR; the interaction with MTR could modulate MMACHC-dependent processing of cobalamin. Heterodimer with MMADHC; the interaction might play a role in the regulation of the balance between AdoCbl and MeCbl synthesis. Requires FAD as cofactor. It depends on FMN as a cofactor. In terms of tissue distribution, widely expressed. Expressed at higher level in fetal liver. Also expressed in spleen, lymph node, thymus and bone marrow. Weakly or not expressed in peripheral blood leukocytes.

Its subcellular location is the cytoplasm. The protein resides in the cytosol. It catalyses the reaction 2 cob(II)alamin-[cyanocobalamin reductase] + 2 hydrogen cyanide + NADP(+) = 2 cyanocob(III)alamin + 2 apo-[cyanocobalamin reductase] + NADPH + H(+). The enzyme catalyses apo-[alkylcobalamin reductase] + an R-cob(III)alamin + glutathione = cob(I)alamin-[alkylcobalamin reductase] + an S-substituted glutathione + H(+). It carries out the reaction apo-[alkylcobalamin reductase] + methylcob(III)alamin + glutathione = S-methyl glutathione + cob(I)alamin-[alkylcobalamin reductase] + H(+). The catalysed reaction is apo-[alkylcobalamin reductase] + adenosylcob(III)alamin + glutathione = S-adenosylglutathione + cob(I)alamin-[alkylcobalamin reductase] + H(+). Functionally, cobalamin (vitamin B12) cytosolic chaperone that catalyzes the reductive decyanation of cyanocob(III)alamin (cyanocobalamin, CNCbl) to yield cob(II)alamin and cyanide, using FAD or FMN as cofactors and NADPH as cosubstrate. Cyanocobalamin constitutes the inactive form of vitamin B12 introduced from the diet, and is converted into the active cofactors methylcobalamin (MeCbl) involved in methionine biosynthesis, and 5'-deoxyadenosylcobalamin (AdoCbl) involved in the TCA cycle. Forms a complex with the lysosomal transporter ABCD4 and its chaperone LMBRD1, to transport cobalamin across the lysosomal membrane into the cytosol. The processing of cobalamin in the cytosol occurs in a multiprotein complex composed of at least MMACHC, MMADHC, MTRR (methionine synthase reductase) and MTR (methionine synthase) which may contribute to shuttle safely and efficiently cobalamin towards MTR in order to produce methionine. Also acts as a glutathione transferase by catalyzing the dealkylation of the alkylcob(III)alamins MeCbl and AdoCbl, using the thiolate of glutathione for nucleophilic displacement to generate cob(I)alamin and the corresponding glutathione thioether. The conversion of incoming MeCbl or AdoCbl into a common intermediate cob(I)alamin is necessary to meet the cellular needs for both cofactors. Cysteine and homocysteine cannot substitute for glutathione in this reaction. The protein is Cyanocobalamin reductase / alkylcobalamin dealkylase of Homo sapiens (Human).